We begin with the raw amino-acid sequence, 245 residues long: Adenylate kinase (245 aa).

15-20 (GSGKGT) is a binding site for ATP. The segment at 35–64 (SSGDLLRDAVSKDTPLSQEIKSYLDQGKLL) is NMP. Residues Ser36, Arg41, 62 to 64 (KLL), 103 to 106 (GFPR), and Gln110 each bind AMP. The segment at 143 to 176 (SRYICPACQGIYNEQQGFSSCPKCSVELIRRSDD) is LID. Residue Arg144 coordinates ATP. 2 residues coordinate Zn(2+): Cys147 and Cys150. 153 to 154 (IY) is an ATP binding site. Zn(2+)-binding residues include Cys163 and Cys166. The AMP site is built by Arg173 and Arg184. Ala212 is a binding site for ATP.

This sequence belongs to the adenylate kinase family. As to quaternary structure, monomer.

The protein localises to the cytoplasm. It carries out the reaction AMP + ATP = 2 ADP. The protein operates within purine metabolism; AMP biosynthesis via salvage pathway; AMP from ADP: step 1/1. Functionally, catalyzes the reversible transfer of the terminal phosphate group between ATP and AMP. Plays an important role in cellular energy homeostasis and in adenine nucleotide metabolism. The chain is Adenylate kinase from Chlamydia trachomatis serovar A (strain ATCC VR-571B / DSM 19440 / HAR-13).